Here is a 335-residue protein sequence, read N- to C-terminus: Acyl-CoA Delta(11) desaturase (335 aa).

The next 3 helical transmembrane spans lie at Leu-39–Ser-59, Thr-64–His-84, and Leu-98–Ile-118. Residues His-84 to His-89 carry the Histidine box-1 motif. The Histidine box-2 signature appears at His-121–His-125. The next 2 helical transmembrane spans lie at Ala-182–Trp-202 and Thr-213–Gly-235. Positions His-261–His-265 match the Histidine box-3 motif. The interval Met-312–Gln-335 is disordered. The span at Val-321–Gln-335 shows a compositional bias: polar residues.

It belongs to the fatty acid desaturase type 1 family. Requires Fe cation as cofactor. In terms of tissue distribution, detected in pheromone gland.

The protein resides in the membrane. It catalyses the reaction an 11,12-saturated fatty acyl-CoA + 2 Fe(II)-[cytochrome b5] + O2 + 2 H(+) = an (11Z)-Delta(11)-fatty acyl-CoA + 2 Fe(III)-[cytochrome b5] + 2 H2O. Functionally, catalyzes the formation of Delta(11) fatty acyl precursors in the pheromone gland, with a preference for myristic acid. This is Acyl-CoA Delta(11) desaturase from Choristoneura rosaceana (Oblique banded leafroller).